The chain runs to 185 residues: Ribosome-recycling factor (185 aa).

The protein belongs to the RRF family.

The protein localises to the cytoplasm. Functionally, responsible for the release of ribosomes from messenger RNA at the termination of protein biosynthesis. May increase the efficiency of translation by recycling ribosomes from one round of translation to another. The polypeptide is Ribosome-recycling factor (Pseudomonas fluorescens (strain SBW25)).